Reading from the N-terminus, the 46-residue chain is Photosystem II reaction center protein Psb30 (46 aa).

Met1 carries the post-translational modification N-formylmethionine. Topologically, residues Met1 to Ala20 are lumenal. A helical membrane pass occupies residues Gln21–Leu38. The Cytoplasmic portion of the chain corresponds to Leu39–Leu46.

The protein belongs to the Psb30/Ycf12 family. As to quaternary structure, PSII is composed of 1 copy each of membrane proteins PsbA, PsbB, PsbC, PsbD, PsbE, PsbF, PsbH, PsbI, PsbJ, PsbK, PsbL, PsbM, PsbT, PsbX, PsbY, PsbZ, Psb30/Ycf12, peripheral proteins PsbO, CyanoQ (PsbQ), PsbU, PsbV and a large number of cofactors. It forms dimeric complexes. Part of a photosystem II (PSII) assembly intermediate complex PSII-I; crystallized from a strain deleted of psbJ, it forms monomeric PSII before addition of the oxygen evolving complex. PSII-I includes 3 assembly factors not found in mature PSII (Psb27, Psb28 and Psb34). PSII binds multiple chlorophylls, carotenoids and specific lipids. is required as a cofactor.

The protein localises to the cellular thylakoid membrane. Its function is as follows. A core subunit of photosystem II (PSII). PSII is a light-driven water plastoquinone oxidoreductase, using light energy to abstract electrons from H(2)O, generating a proton gradient subsequently used for ATP formation. Helps stabilize PSII. This chain is Photosystem II reaction center protein Psb30, found in Thermosynechococcus vestitus (strain NIES-2133 / IAM M-273 / BP-1).